A 247-amino-acid chain; its full sequence is Protein NipSnap homolog 3B (247 aa).

N6-succinyllysine is present on residues Lys-45, Lys-48, Lys-57, and Lys-166.

The protein belongs to the NipSnap family.

The protein resides in the cytoplasm. Its subcellular location is the cytosol. The protein is Protein NipSnap homolog 3B (Nipsnap3b) of Mus musculus (Mouse).